Consider the following 277-residue polypeptide: Zaragozic acid A biosynthesis cluster protein 1 (277 aa).

Its pathway is secondary metabolite biosynthesis. Its function is as follows. Part of the gene cluster that mediates the biosynthesis of squalestatin S1 (SQS1, also known as zaragozic acid A), a heavily oxidized fungal polyketide that offers potent cholesterol lowering activity by targeting squalene synthase (SS). SQS1 is composed of a 2,8-dioxobicyclic[3.2.1]octane-3,4,5-tricarboxyclic acid core that is connected to two lipophilic polyketide arms. These initial steps feature the priming of an unusual benzoic acid starter unit onto the highly reducing polyketide synthase clz14, followed by oxaloacetate extension and product release to generate a tricarboxylic acid containing product. The phenylalanine ammonia lyase (PAL) clz10 and the acyl-CoA ligase clz12 are involved in transforming phenylalanine into benzoyl-CoA. The citrate synthase-like protein clz17 is involved in connecting the C-alpha-carbons of the hexaketide chain and oxaloacetate to afford the tricarboxylic acid unit. The potential hydrolytic enzymes, clz11 and clz13, are in close proximity to pks2 and may participate in product release. On the other side, the tetraketide arm is synthesized by a the squalestatin tetraketide synthase clz2 and enzymatically esterified to the core in the last biosynthetic step, by the acetyltransferase clz6. The biosynthesis of the tetraketide must involve 3 rounds of chain extension. After the first and second rounds methyl-transfer occurs, and in all rounds of extension the ketoreductase and dehydratase are active. The enoyl reductase and C-MeT of clz2 are not active in the final round of extension. The acetyltransferase clz6 appears to have a broad substrate selectivity for its acyl CoA substrate, allowing the in vitro synthesis of novel squalestatins. The biosynthesis of SQS1 requires several oxidative steps likely performed by oxidoreductases clz3, clz15 and clz16. Finally, in support of the identification of the cluster as being responsible for SQS1 production, the cluster contains a gene encoding a putative squalene synthase (SS) clz20, suggesting a likely mechanism for self-resistance. This is Zaragozic acid A biosynthesis cluster protein 1 from Cochliobolus lunatus (Filamentous fungus).